The sequence spans 256 residues: Thiazole synthase (256 aa).

The active-site Schiff-base intermediate with DXP is Lys-95. Residues Gly-156, 182–183 (AG), and 204–205 (NT) each bind 1-deoxy-D-xylulose 5-phosphate.

Belongs to the ThiG family. Homotetramer. Forms heterodimers with either ThiH or ThiS.

The protein localises to the cytoplasm. The enzyme catalyses [ThiS sulfur-carrier protein]-C-terminal-Gly-aminoethanethioate + 2-iminoacetate + 1-deoxy-D-xylulose 5-phosphate = [ThiS sulfur-carrier protein]-C-terminal Gly-Gly + 2-[(2R,5Z)-2-carboxy-4-methylthiazol-5(2H)-ylidene]ethyl phosphate + 2 H2O + H(+). It functions in the pathway cofactor biosynthesis; thiamine diphosphate biosynthesis. Its function is as follows. Catalyzes the rearrangement of 1-deoxy-D-xylulose 5-phosphate (DXP) to produce the thiazole phosphate moiety of thiamine. Sulfur is provided by the thiocarboxylate moiety of the carrier protein ThiS. In vitro, sulfur can be provided by H(2)S. The polypeptide is Thiazole synthase (Escherichia coli O6:H1 (strain CFT073 / ATCC 700928 / UPEC)).